We begin with the raw amino-acid sequence, 366 residues long: Pyrimidine monooxygenase RutA (366 aa).

FMN contacts are provided by residues 49-50 (IK), N115, E124, 140-141 (RY), and S190.

The protein belongs to the NtaA/SnaA/DszA monooxygenase family. RutA subfamily.

The catalysed reaction is uracil + FMNH2 + NADH + O2 = (Z)-3-ureidoacrylate + FMN + NAD(+) + H2O + H(+). The enzyme catalyses thymine + FMNH2 + NADH + O2 = (Z)-2-methylureidoacrylate + FMN + NAD(+) + H2O + H(+). In terms of biological role, catalyzes the pyrimidine ring opening between N-3 and C-4 by an unusual flavin hydroperoxide-catalyzed mechanism, adding oxygen atoms in the process to yield ureidoacrylate peracid, that immediately reacts with FMN forming ureidoacrylate and FMN-N(5)-oxide. The FMN-N(5)-oxide reacts spontaneously with NADH to produce FMN. Requires the flavin reductase RutF to regenerate FMN in vivo. This Serratia proteamaculans (strain 568) protein is Pyrimidine monooxygenase RutA.